The chain runs to 306 residues: tRNA pseudouridine synthase B (306 aa).

D51 functions as the Nucleophile in the catalytic mechanism.

This sequence belongs to the pseudouridine synthase TruB family. Type 1 subfamily.

The catalysed reaction is uridine(55) in tRNA = pseudouridine(55) in tRNA. Functionally, responsible for synthesis of pseudouridine from uracil-55 in the psi GC loop of transfer RNAs. The chain is tRNA pseudouridine synthase B from Nocardia farcinica (strain IFM 10152).